We begin with the raw amino-acid sequence, 956 residues long: uncharacterized protein (956 aa).

A Fibronectin type-III domain is found at 40–141 (PATKVSIDKI…IYCMTKAREA (102 aa)). Disordered stretches follow at residues 152-173 (RNTITSSTAMQPRNSKSEPAPL) and 488-600 (NNGD…SYSH). Composition is skewed to polar residues over residues 153–165 (NTITSSTAMQPRN) and 488–523 (NNGDSLAATNSNNSAEKNRSSGSIQLPLSNNMSRTG). Residue threonine 154 is modified to Phosphothreonine. 2 positions are modified to phosphoserine: serine 501 and serine 520. Low complexity predominate over residues 524–543 (SIDLISNNNKSINNSNADSA). Residues 552–563 (VSYSPSNEPIQP) show a composition bias toward polar residues. Positions 564–574 (SSSLLSQLTQD) are enriched in low complexity. Over residues 578–599 (RSMLSNHISSNNENKQQPSSYS) the composition is skewed to polar residues. Phosphoserine occurs at positions 802, 842, and 895. Positions 875-956 (VGPKVPAKEP…NLFNPHSHDS (82 aa)) are disordered. Over residues 895–904 (SNSSISSAWS) the composition is skewed to low complexity.

This is an uncharacterized protein from Saccharomyces cerevisiae (strain ATCC 204508 / S288c) (Baker's yeast).